Reading from the N-terminus, the 293-residue chain is Acetyl-coenzyme A carboxylase carboxyl transferase subunit beta (293 aa).

In terms of domain architecture, CoA carboxyltransferase N-terminal spans 29-293; the sequence is LWSKCPECGL…GCRPMEITSA (265 aa). Zn(2+)-binding residues include cysteine 33, cysteine 36, cysteine 52, and cysteine 55. Residues 33–55 form a C4-type zinc finger; the sequence is CPECGLVVYVKDLKGNASVCAGC.

It belongs to the AccD/PCCB family. In terms of assembly, acetyl-CoA carboxylase is a heterohexamer composed of biotin carboxyl carrier protein (AccB), biotin carboxylase (AccC) and two subunits each of ACCase subunit alpha (AccA) and ACCase subunit beta (AccD). Requires Zn(2+) as cofactor.

Its subcellular location is the cytoplasm. It carries out the reaction N(6)-carboxybiotinyl-L-lysyl-[protein] + acetyl-CoA = N(6)-biotinyl-L-lysyl-[protein] + malonyl-CoA. The protein operates within lipid metabolism; malonyl-CoA biosynthesis; malonyl-CoA from acetyl-CoA: step 1/1. Component of the acetyl coenzyme A carboxylase (ACC) complex. Biotin carboxylase (BC) catalyzes the carboxylation of biotin on its carrier protein (BCCP) and then the CO(2) group is transferred by the transcarboxylase to acetyl-CoA to form malonyl-CoA. The polypeptide is Acetyl-coenzyme A carboxylase carboxyl transferase subunit beta (Parasynechococcus marenigrum (strain WH8102)).